Consider the following 368-residue polypeptide: MEEILIWIKKLEKYLYALNAKVAGIPLYKIIIASAIMLFTLILRRLIAFLIVKILTKLTIRTKTDVDELIVKAFVKPFSYFIVVFGFYLSLLVLEVPKVYADKFLKTFSLLILGWAIIRFLNLFHNKIVEFFVKVGGKDFAEEVGDFILKILKAFVVVIVGASLLQEWGVNIGAILASVGLLGLAVSLAAKDTFENILSGLIILLDKPVKVGETVKVKDFMGSVEDIGLRSTKIRTFDKSLVTIPNRDIVNNHVENFTRRNKRRVRFYIGVVYSTKREQLENILKEIRELLKEHPGVAKDEKFYVYFENYGDSSLNILIQYYANTNDYEEYLKIIEDINLKIMEIVEKNGSSFAFPSRSVYIEKMPKS.

The next 5 helical transmembrane spans lie at 22–42 (VAGI…FTLI), 74–94 (FVKP…LLVL), 104–124 (FLKT…LNLF), 144–164 (VGDF…GASL), and 168–188 (WGVN…AVSL).

The protein belongs to the MscS (TC 1.A.23) family.

The protein resides in the cell membrane. This is an uncharacterized protein from Aquifex aeolicus (strain VF5).